A 203-amino-acid polypeptide reads, in one-letter code: V-type ATP synthase subunit D (203 aa).

The protein belongs to the V-ATPase D subunit family.

Functionally, produces ATP from ADP in the presence of a proton gradient across the membrane. This is V-type ATP synthase subunit D from Streptococcus pneumoniae (strain CGSP14).